Reading from the N-terminus, the 248-residue chain is Functional amyloid sbunit FapE (248 aa).

A signal peptide spans 1 to 20 (MNTSRWLTALCLAASMPAYA).

It belongs to the FapE family. A minor component of purified amyloid fibrils. Fibrils are resistant to boiling in 2% (weight/vol) SDS and require &gt;90% (vol/vol) formic acid to dissolve.

It localises to the fimbrium. Its subcellular location is the secreted. A minor component of the functional amyloid in this bacterium. Upon overexpression of the endogenous six-gene locus (fapA-fapF) in situ, cells form large clumps during liquid growth, make large amounts of biofilm and produce amyloid fibrils. Expression of the 6 gene operon in E.coli strain BL21(DE3) induces flocculation and biofilm formation with copious extracellular fibrils. The chain is Functional amyloid sbunit FapE from Pseudomonas fluorescens.